Here is a 429-residue protein sequence, read N- to C-terminus: Probable electron transfer flavoprotein-quinone oxidoreductase YdiS (429 aa).

Position 8–22 (8–22 (AIVVGAGVAGSVAAL)) interacts with FAD.

This sequence belongs to the ETF-QO/FixC family. It depends on FAD as a cofactor.

Functionally, probably accepts electrons from YdiQ/YdiR and reduces a quinone. The polypeptide is Probable electron transfer flavoprotein-quinone oxidoreductase YdiS (ydiS) (Escherichia coli (strain K12)).